The sequence spans 180 residues: Shikimate kinase (180 aa).

14–19 (GAGKTC) is a binding site for ATP. T18 provides a ligand contact to Mg(2+). 3 residues coordinate substrate: D36, R60, and G82. ATP is bound at residue R120. Residue R139 coordinates substrate.

This sequence belongs to the shikimate kinase family. Monomer. It depends on Mg(2+) as a cofactor.

It is found in the cytoplasm. It catalyses the reaction shikimate + ATP = 3-phosphoshikimate + ADP + H(+). Its pathway is metabolic intermediate biosynthesis; chorismate biosynthesis; chorismate from D-erythrose 4-phosphate and phosphoenolpyruvate: step 5/7. Its function is as follows. Catalyzes the specific phosphorylation of the 3-hydroxyl group of shikimic acid using ATP as a cosubstrate. This chain is Shikimate kinase, found in Stenotrophomonas maltophilia (strain R551-3).